A 156-amino-acid chain; its full sequence is Ribosomal RNA large subunit methyltransferase H (156 aa).

Residues Leu73, Gly104, and 123-128 (ISSMTL) contribute to the S-adenosyl-L-methionine site.

The protein belongs to the RNA methyltransferase RlmH family. In terms of assembly, homodimer.

It localises to the cytoplasm. It catalyses the reaction pseudouridine(1915) in 23S rRNA + S-adenosyl-L-methionine = N(3)-methylpseudouridine(1915) in 23S rRNA + S-adenosyl-L-homocysteine + H(+). Functionally, specifically methylates the pseudouridine at position 1915 (m3Psi1915) in 23S rRNA. This chain is Ribosomal RNA large subunit methyltransferase H, found in Burkholderia ambifaria (strain ATCC BAA-244 / DSM 16087 / CCUG 44356 / LMG 19182 / AMMD) (Burkholderia cepacia (strain AMMD)).